A 147-amino-acid chain; its full sequence is Nucleoside diphosphate kinase (147 aa).

6 residues coordinate ATP: K11, F59, R87, T93, R104, and N114. Residue H117 is the Pros-phosphohistidine intermediate of the active site.

Belongs to the NDK family. Homotetramer. The cofactor is Mg(2+).

The protein resides in the cytoplasm. It carries out the reaction a 2'-deoxyribonucleoside 5'-diphosphate + ATP = a 2'-deoxyribonucleoside 5'-triphosphate + ADP. The enzyme catalyses a ribonucleoside 5'-diphosphate + ATP = a ribonucleoside 5'-triphosphate + ADP. Its function is as follows. Major role in the synthesis of nucleoside triphosphates other than ATP. The ATP gamma phosphate is transferred to the NDP beta phosphate via a ping-pong mechanism, using a phosphorylated active-site intermediate. This Anaeromyxobacter dehalogenans (strain 2CP-C) protein is Nucleoside diphosphate kinase.